Consider the following 401-residue polypeptide: Imidazolonepropionase (401 aa).

2 residues coordinate Fe(3+): H70 and H72. The Zn(2+) site is built by H70 and H72. Residues R79, Y142, and H175 each contribute to the 4-imidazolone-5-propanoate site. Y142 serves as a coordination point for N-formimidoyl-L-glutamate. Residue H238 coordinates Fe(3+). H238 serves as a coordination point for Zn(2+). Residue Q241 coordinates 4-imidazolone-5-propanoate. D313 contacts Fe(3+). Position 313 (D313) interacts with Zn(2+). N-formimidoyl-L-glutamate contacts are provided by N315 and G317. A 4-imidazolone-5-propanoate-binding site is contributed by T318.

This sequence belongs to the metallo-dependent hydrolases superfamily. HutI family. Zn(2+) serves as cofactor. It depends on Fe(3+) as a cofactor.

The protein localises to the cytoplasm. The enzyme catalyses 4-imidazolone-5-propanoate + H2O = N-formimidoyl-L-glutamate. Its pathway is amino-acid degradation; L-histidine degradation into L-glutamate; N-formimidoyl-L-glutamate from L-histidine: step 3/3. In terms of biological role, catalyzes the hydrolytic cleavage of the carbon-nitrogen bond in imidazolone-5-propanoate to yield N-formimidoyl-L-glutamate. It is the third step in the universal histidine degradation pathway. The chain is Imidazolonepropionase from Acidiphilium cryptum (strain JF-5).